A 530-amino-acid chain; its full sequence is CTP synthase (530 aa).

Positions 1–267 (MTKYVFVTGG…DDFVLNHFKM (267 aa)) are amidoligase domain. Residue Ser13 coordinates CTP. Ser13 serves as a coordination point for UTP. Residue 14 to 19 (SLGKGI) coordinates ATP. Tyr54 provides a ligand contact to L-glutamine. ATP is bound at residue Asp71. Mg(2+)-binding residues include Asp71 and Glu141. Residues 148–150 (DIE), 188–193 (KTKPTQ), and Lys224 contribute to the CTP site. UTP contacts are provided by residues 188 to 193 (KTKPTQ) and Lys224. Residue 240-242 (RDA) participates in ATP binding. The Glutamine amidotransferase type-1 domain occupies 292-530 (KIALVGKYIE…LFKAFIGATM (239 aa)). Gly354 lines the L-glutamine pocket. Cys381 serves as the catalytic Nucleophile; for glutamine hydrolysis. Residues 382-385 (LGMQ), Glu405, and Arg463 each bind L-glutamine. Residues His508 and Glu510 contribute to the active site.

This sequence belongs to the CTP synthase family. Homotetramer.

It catalyses the reaction UTP + L-glutamine + ATP + H2O = CTP + L-glutamate + ADP + phosphate + 2 H(+). It carries out the reaction L-glutamine + H2O = L-glutamate + NH4(+). The enzyme catalyses UTP + NH4(+) + ATP = CTP + ADP + phosphate + 2 H(+). Its pathway is pyrimidine metabolism; CTP biosynthesis via de novo pathway; CTP from UDP: step 2/2. Allosterically activated by GTP, when glutamine is the substrate; GTP has no effect on the reaction when ammonia is the substrate. The allosteric effector GTP functions by stabilizing the protein conformation that binds the tetrahedral intermediate(s) formed during glutamine hydrolysis. Inhibited by the product CTP, via allosteric rather than competitive inhibition. In terms of biological role, catalyzes the ATP-dependent amination of UTP to CTP with either L-glutamine or ammonia as the source of nitrogen. Regulates intracellular CTP levels through interactions with the four ribonucleotide triphosphates. The sequence is that of CTP synthase from Latilactobacillus sakei subsp. sakei (strain 23K) (Lactobacillus sakei subsp. sakei).